The chain runs to 245 residues: P2Y purinoceptor 13 (245 aa).

The Extracellular segment spans residues 1–9 (QLRAFVCRL). C7 and C85 are disulfide-bonded. Residues 10–30 (SSVIFYETMYVGIVLLGLIAF) form a helical membrane-spanning segment. Topologically, residues 31 to 35 (DRFLK) are cytoplasmic. The helical transmembrane segment at 36-56 (IIRPLRNIFLKKTVFAKTVSV) threads the bilayer. Topologically, residues 57–85 (FIWSFFFFISLPNMILSNKEATPSSVKKC) are extracellular. Residues 86-106 (ASLKGPLGLKWHQIVNNISQF) traverse the membrane as a helical segment. Over 107–126 (IFWTVFVLMLVFYVVIAKKV) the chain is Cytoplasmic. Residues 127–147 (YDSYRKSKSKDRKNNKKLEGK) form a helical membrane-spanning segment. Topologically, residues 148-174 (VFVVVAVFFVCFAPFHFTRVPYTYSQT) are extracellular. A helical transmembrane segment spans residues 175–195 (NNKTDCRLQNQLFIAKETTLF). Over 196–245 (LAATNICMDPLIYIFLCKKFTEKLPCMRGRKTIASSQENQSSQTDNITLG) the chain is Cytoplasmic.

It belongs to the G-protein coupled receptor 1 family.

It is found in the cell membrane. Functionally, receptor for ADP. Coupled to G(i)-proteins. May play a role in hematopoiesis and the immune system. The polypeptide is P2Y purinoceptor 13 (P2RY13) (Macaca fascicularis (Crab-eating macaque)).